Reading from the N-terminus, the 232-residue chain is 5'-methylthioadenosine/S-adenosylhomocysteine nucleosidase (232 aa).

E12 acts as the Proton acceptor in catalysis. Residues G78, I152, and 173–174 each bind substrate; that span reads ME. The active-site Proton donor is the D197.

Belongs to the PNP/UDP phosphorylase family. MtnN subfamily. Homodimer.

It catalyses the reaction S-adenosyl-L-homocysteine + H2O = S-(5-deoxy-D-ribos-5-yl)-L-homocysteine + adenine. The enzyme catalyses S-methyl-5'-thioadenosine + H2O = 5-(methylsulfanyl)-D-ribose + adenine. It carries out the reaction 5'-deoxyadenosine + H2O = 5-deoxy-D-ribose + adenine. It participates in amino-acid biosynthesis; L-methionine biosynthesis via salvage pathway; S-methyl-5-thio-alpha-D-ribose 1-phosphate from S-methyl-5'-thioadenosine (hydrolase route): step 1/2. Catalyzes the irreversible cleavage of the glycosidic bond in both 5'-methylthioadenosine (MTA) and S-adenosylhomocysteine (SAH/AdoHcy) to adenine and the corresponding thioribose, 5'-methylthioribose and S-ribosylhomocysteine, respectively. Also cleaves 5'-deoxyadenosine, a toxic by-product of radical S-adenosylmethionine (SAM) enzymes, into 5-deoxyribose and adenine. Thus, is required for in vivo function of the radical SAM enzymes biotin synthase and lipoic acid synthase, that are inhibited by 5'-deoxyadenosine accumulation. The polypeptide is 5'-methylthioadenosine/S-adenosylhomocysteine nucleosidase (Edwardsiella ictaluri (strain 93-146)).